The chain runs to 659 residues: tRNA (guanine(26)-N(2))-dimethyltransferase (659 aa).

The transit peptide at 1 to 23 (MQGSSLWLSLTFRSARVLSRARF) directs the protein to the mitochondrion. Residues 55-499 (TTVTEGAAKI…APASALWDIM (445 aa)) form the Trm1 methyltransferase domain. Arg-82 is an S-adenosyl-L-methionine binding site. Ser-120 bears the Phosphoserine mark. Arg-166 and Asp-184 together coordinate S-adenosyl-L-methionine. Positions 348, 351, 384, and 387 each coordinate Zn(2+). Ser-517 is subject to Phosphoserine. Disordered regions lie at residues 537–578 (EDAN…AMEE) and 616–659 (RGDQ…PGID). The short motif at 543–575 (SRQRGLKRFQANPEANWGPRPRARPGGKAADEA) is the Nuclear localization signal element. The segment at 600–627 (RLKTFPCKRFKEGTCQRGDQCCYSHSPP) adopts a C3H1-type zinc-finger fold. Ser-625 is modified (phosphoserine). Thr-628 and Thr-646 each carry phosphothreonine.

The protein belongs to the class I-like SAM-binding methyltransferase superfamily. Trm1 family. Post-translationally, (Microbial infection) Cleaved between Gln-530 and Ala-531 by the 3C-like proteinase nsp5 from human coronavirus SARS-CoV-2, leading to its inactivation.

Its subcellular location is the mitochondrion. The protein localises to the nucleus. The protein resides in the cytoplasm. The enzyme catalyses guanosine(26) in tRNA + 2 S-adenosyl-L-methionine = N(2)-dimethylguanosine(26) in tRNA + 2 S-adenosyl-L-homocysteine + 2 H(+). Dimethylates a single guanine residue at position 26 of most nuclear- and mitochondrial-encoded tRNAs using S-adenosyl-L-methionine as donor of the methyl groups. tRNA guanine(26)-dimethylation is required for redox homeostasis and ensure proper cellular proliferation and oxidative stress survival. This chain is tRNA (guanine(26)-N(2))-dimethyltransferase, found in Homo sapiens (Human).